Reading from the N-terminus, the 506-residue chain is ATP synthase subunit alpha (506 aa).

171 to 178 provides a ligand contact to ATP; sequence GDRQTGKT.

Belongs to the ATPase alpha/beta chains family. As to quaternary structure, F-type ATPases have 2 components, CF(1) - the catalytic core - and CF(0) - the membrane proton channel. CF(1) has five subunits: alpha(3), beta(3), gamma(1), delta(1), epsilon(1). CF(0) has four main subunits: a(1), b(1), b'(1) and c(9-12).

It localises to the cellular thylakoid membrane. It carries out the reaction ATP + H2O + 4 H(+)(in) = ADP + phosphate + 5 H(+)(out). In terms of biological role, produces ATP from ADP in the presence of a proton gradient across the membrane. The alpha chain is a regulatory subunit. The protein is ATP synthase subunit alpha of Trichormus variabilis (strain ATCC 29413 / PCC 7937) (Anabaena variabilis).